The following is a 407-amino-acid chain: Multifunctional CCA protein (407 aa).

ATP-binding residues include Gly8 and Arg11. CTP contacts are provided by Gly8 and Arg11. The Mg(2+) site is built by Asp21 and Asp23. Arg91, Arg137, and Arg140 together coordinate ATP. CTP contacts are provided by Arg91, Arg137, and Arg140. The HD domain maps to 228 to 329; it reads TGIHTLMVAQ…IKIFDKMDVW (102 aa).

The protein belongs to the tRNA nucleotidyltransferase/poly(A) polymerase family. Bacterial CCA-adding enzyme type 1 subfamily. Monomer. Can also form homodimers and oligomers. Requires Mg(2+) as cofactor. The cofactor is Ni(2+).

It carries out the reaction a tRNA precursor + 2 CTP + ATP = a tRNA with a 3' CCA end + 3 diphosphate. The enzyme catalyses a tRNA with a 3' CCA end + 2 CTP + ATP = a tRNA with a 3' CCACCA end + 3 diphosphate. Catalyzes the addition and repair of the essential 3'-terminal CCA sequence in tRNAs without using a nucleic acid template. Adds these three nucleotides in the order of C, C, and A to the tRNA nucleotide-73, using CTP and ATP as substrates and producing inorganic pyrophosphate. tRNA 3'-terminal CCA addition is required both for tRNA processing and repair. Also involved in tRNA surveillance by mediating tandem CCA addition to generate a CCACCA at the 3' terminus of unstable tRNAs. While stable tRNAs receive only 3'-terminal CCA, unstable tRNAs are marked with CCACCA and rapidly degraded. The polypeptide is Multifunctional CCA protein (Aliivibrio fischeri (strain ATCC 700601 / ES114) (Vibrio fischeri)).